Consider the following 21-residue polypeptide: Hemocyanin subunit 6 (21 aa).

It belongs to the tyrosinase family. Hemocyanin subfamily. As to expression, hemolymph.

Its subcellular location is the secreted. The protein localises to the extracellular space. Functionally, hemocyanins are copper-containing oxygen carriers occurring freely dissolved in the hemolymph of many mollusks and arthropods. The chain is Hemocyanin subunit 6 from Maja squinado (Mediterranean spider crab).